A 1317-amino-acid chain; its full sequence is Putative late blight resistance protein homolog R1B-14 (1317 aa).

Coiled-coil stretches lie at residues 419-442 (RYSD…ESLQ) and 535-556 (RMNE…RLLN). In terms of domain architecture, NB-ARC spans 521–823 (TVITHTSSQL…SESFIKSSEG (303 aa)). Position 568-575 (568-575 (GMPGLGKT)) interacts with ATP. LRR repeat units follow at residues 944-968 (FKFL…LFYL), 987-1015 (LWNL…IWDM), 1090-1114 (PIRL…ISAP), 1138-1161 (LKHL…KVSN), 1164-1186 (FPQL…ADDA), and 1187-1211 (FPNL…FMDI). One can recognise an HMA domain in the interval 1251-1317 (IKKMVLKFDI…VSKLRKRGML (67 aa)).

It belongs to the disease resistance NB-LRR family.

The protein resides in the cytoplasm. The protein localises to the membrane. Confers resistance to late blight (Phytophthora infestans) races carrying the avirulence gene Avr1. Resistance proteins guard the plant against pathogens that contain an appropriate avirulence protein via an indirect interaction with this avirulence protein. That triggers a defense system including the hypersensitive response, which restricts the pathogen growth. This is Putative late blight resistance protein homolog R1B-14 (R1B-14) from Solanum demissum (Wild potato).